Here is a 248-residue protein sequence, read N- to C-terminus: UPF0736 protein Bcer98_0893 (248 aa).

This sequence belongs to the UPF0736 family.

The protein is UPF0736 protein Bcer98_0893 of Bacillus cytotoxicus (strain DSM 22905 / CIP 110041 / 391-98 / NVH 391-98).